Consider the following 448-residue polypeptide: Probable glycine dehydrogenase (decarboxylating) subunit 1 (448 aa).

This sequence belongs to the GcvP family. N-terminal subunit subfamily. The glycine cleavage system is composed of four proteins: P, T, L and H. In this organism, the P 'protein' is a heterodimer of two subunits.

It catalyses the reaction N(6)-[(R)-lipoyl]-L-lysyl-[glycine-cleavage complex H protein] + glycine + H(+) = N(6)-[(R)-S(8)-aminomethyldihydrolipoyl]-L-lysyl-[glycine-cleavage complex H protein] + CO2. Functionally, the glycine cleavage system catalyzes the degradation of glycine. The P protein binds the alpha-amino group of glycine through its pyridoxal phosphate cofactor; CO(2) is released and the remaining methylamine moiety is then transferred to the lipoamide cofactor of the H protein. This is Probable glycine dehydrogenase (decarboxylating) subunit 1 from Lysinibacillus sphaericus (strain C3-41).